The primary structure comprises 164 residues: Transcriptional repressor NrdR (164 aa).

A zinc finger lies at Cys3 to Cys34. The region spanning Leu49 to Glu139 is the ATP-cone domain.

Belongs to the NrdR family. It depends on Zn(2+) as a cofactor.

Negatively regulates transcription of bacterial ribonucleotide reductase nrd genes and operons by binding to NrdR-boxes. In Streptococcus pyogenes serotype M6 (strain ATCC BAA-946 / MGAS10394), this protein is Transcriptional repressor NrdR.